A 183-amino-acid chain; its full sequence is Ribosome rescue factor SmrB (183 aa).

In terms of domain architecture, Smr spans 98 to 173 (LDLHGLTQLQ…GDAALLVLIE (76 aa)).

It belongs to the SmrB family. In terms of assembly, associates with collided ribosomes, but not with correctly translating polysomes.

Functionally, acts as a ribosome collision sensor. Detects stalled/collided disomes (pairs of ribosomes where the leading ribosome is stalled and a second ribosome has collided with it) and endonucleolytically cleaves mRNA at the 5' boundary of the stalled ribosome. Stalled/collided disomes form a new interface (primarily via the 30S subunits) that binds SmrB. Cleaved mRNA becomes available for tmRNA ligation, leading to ribosomal subunit dissociation and rescue of stalled ribosomes. This is Ribosome rescue factor SmrB from Escherichia coli O157:H7.